The sequence spans 429 residues: Tryptophan synthase beta chain 2 (429 aa).

The disordered stretch occupies residues 18-40 (NINPDLPSPLPEPKNPEGGKNIE). At Lys-110 the chain carries N6-(pyridoxal phosphate)lysine.

The protein belongs to the TrpB family. In terms of assembly, tetramer of two alpha and two beta chains. It depends on pyridoxal 5'-phosphate as a cofactor.

The enzyme catalyses (1S,2R)-1-C-(indol-3-yl)glycerol 3-phosphate + L-serine = D-glyceraldehyde 3-phosphate + L-tryptophan + H2O. Its pathway is amino-acid biosynthesis; L-tryptophan biosynthesis; L-tryptophan from chorismate: step 5/5. The beta subunit is responsible for the synthesis of L-tryptophan from indole and L-serine. The chain is Tryptophan synthase beta chain 2 (trpB2) from Methanothermobacter thermautotrophicus (strain ATCC 29096 / DSM 1053 / JCM 10044 / NBRC 100330 / Delta H) (Methanobacterium thermoautotrophicum).